The primary structure comprises 315 residues: Neurogenic differentiation factor 4 (315 aa).

The tract at residues Glu-39–Ala-71 is disordered. The segment covering Asp-44 to Gly-55 has biased composition (acidic residues). The span at Pro-58 to Lys-70 shows a compositional bias: basic residues. Positions Val-78–Leu-130 constitute a bHLH domain. Phosphoserine is present on Ser-89.

Efficient DNA binding requires dimerization with another bHLH protein. Forms a heterodimer with the bHLH protein hes2, and weakly interacts with hey1/hrt1. Post-translationally, serine or threonine phosphorylation within the basic region may regulate neurogenic activity. In terms of tissue distribution, first expressed weakly at stage 12 in primary neuronal precursors. At stages 18 and 21, strongly expressed in the cranial ganglions, with weaker expression remaining in the spinal cord. Later, strongly expressed at sites of neuronal differentiation, namely the eye, forebrain and cranial ganglions.

The protein resides in the nucleus. Probably acts as a transcriptional activator. Mediates neuronal differentiation. Required for the regulation of amacrine cell fate specification in the retina. In Xenopus laevis (African clawed frog), this protein is Neurogenic differentiation factor 4 (neurod4).